The sequence spans 317 residues: Putative peptide import ATP-binding protein BruAb2_0797 (317 aa).

Residues 7–250 (LSVRGLAKHY…PQHPYTRALL (244 aa)) form the ABC transporter domain. Position 43–50 (43–50 (GESGSGKT)) interacts with ATP.

It belongs to the ABC transporter superfamily. The complex is composed of two ATP-binding proteins (BruAb2_0796 and BruAb2_0797), two transmembrane proteins (BruAb2_0794) and a solute-binding protein (BruAb2_0792).

The protein localises to the cell inner membrane. In terms of biological role, probably part of an ABC transporter complex that could be involved in peptide import. Probably responsible for energy coupling to the transport system. The protein is Putative peptide import ATP-binding protein BruAb2_0797 of Brucella abortus biovar 1 (strain 9-941).